Here is a 181-residue protein sequence, read N- to C-terminus: uncharacterized protein (181 aa).

Residues Ser126–Gln148 form a disordered region. Acidic residues predominate over residues Glu131 to Asp144.

The protein belongs to the chlamydial CPn_0422/CT_273/TC_0545 family.

This is an uncharacterized protein from Chlamydia pneumoniae (Chlamydophila pneumoniae).